Here is a 166-residue protein sequence, read N- to C-terminus: Phospholipase A2 inhibitor (166 aa).

The signal sequence occupies residues 1-19; it reads MRLILLSGLLLLGIFLANG. A C-type lectin domain is found at 46–161; sequence LKGSFLIVHK…CDDNLLVVCE (116 aa). Disulfide bonds link C83/C160 and C138/C152. An N-linked (GlcNAc...) asparagine glycan is attached at N122.

This sequence belongs to the alpha-type phospholipase A2 inhibitor family. In terms of assembly, homotrimer; non-covalently linked. Expressed by the liver.

It is found in the secreted. This phospholipase A2 inhibitor binds directly phospholipase A2 in the presence or absence of calcium. In Bothrops jararacussu (Jararacussu), this protein is Phospholipase A2 inhibitor.